The chain runs to 304 residues: Tyrosine recombinase XerC (304 aa).

The 87-residue stretch at 2–88 (ANVKNFLTLF…ALRSFYKFLL (87 aa)) folds into the Core-binding (CB) domain. Residues 109-294 (RIPKFLYEKE…SKDMLRKTYM (186 aa)) enclose the Tyr recombinase domain. Catalysis depends on residues Arg149, Lys173, His246, Arg249, and His272. Tyr281 (O-(3'-phospho-DNA)-tyrosine intermediate) is an active-site residue.

This sequence belongs to the 'phage' integrase family. XerC subfamily. In terms of assembly, forms a cyclic heterotetrameric complex composed of two molecules of XerC and two molecules of XerD.

It localises to the cytoplasm. Site-specific tyrosine recombinase, which acts by catalyzing the cutting and rejoining of the recombining DNA molecules. The XerC-XerD complex is essential to convert dimers of the bacterial chromosome into monomers to permit their segregation at cell division. It also contributes to the segregational stability of plasmids. This Bacillus licheniformis (strain ATCC 14580 / DSM 13 / JCM 2505 / CCUG 7422 / NBRC 12200 / NCIMB 9375 / NCTC 10341 / NRRL NRS-1264 / Gibson 46) protein is Tyrosine recombinase XerC.